Consider the following 343-residue polypeptide: Programmed cell death protein 2 (343 aa).

Residues cysteine 134, cysteine 137, cysteine 145, cysteine 148, cysteine 154, histidine 158, histidine 167, and cysteine 171 each coordinate Zn(2+). The MYND-type; atypical zinc-finger motif lies at 134 to 171 (CRVCGCLAPMTCSRCKQAHYCSKEHQTLDWRLGHKQAC).

Ubiquitinated by PRKN, promoting proteasomal degradation.

The protein localises to the nucleus. May be a DNA-binding protein with a regulatory function. May play an important role in cell death and/or in regulation of cell proliferation. The protein is Programmed cell death protein 2 (Pdcd2) of Mus musculus (Mouse).